A 597-amino-acid chain; its full sequence is Glypican-3 (597 aa).

Residues 1–24 (MAGTVRTACLLVAMLLGLGCLGQA) form the signal peptide. Gln-25 is subject to Pyrrolidone carboxylic acid. 7 cysteine pairs are disulfide-bonded: Cys-34/Cys-71, Cys-64/Cys-261, Cys-72/Cys-264, Cys-196/Cys-348, Cys-251/Cys-284, Cys-273/Cys-421, and Cys-277/Cys-409. Asn-123 and Asn-240 each carry an N-linked (GlcNAc...) asparagine glycan. The residue at position 351 (Ser-351) is a Phosphoserine. N-linked (GlcNAc...) asparagine glycosylation occurs at Asn-417. O-linked (Xyl...) (glycosaminoglycan) serine glycans are attached at residues Ser-494 and Ser-508. The tract at residues 533–553 (DAPGNKQHGNQKDNEITTSHS) is disordered.

It belongs to the glypican family. Heterodimer; disulfide-linked. Cleavage by a furin-like convertase results in production of alpha and beta chains which form a disulfide-linked heterodimer. Interacts with DPP4. Interacts with FGF2. Interacts with WNT5A. Also interacts with WNT3A and WNT7B. Interacts with hedgehog protein SHH; the heparan sulfate chains are not required for the interaction. Also interacts with hedgehog protein IHH. Interacts with CD81. Interacts with Wnt receptors FZD4, FZD7 and FZD8; the heparan sulfate chains are required for the interaction. In terms of processing, O-glycosylated; contains heparan sulfate and/or chondroitin sulfate. Cleaved intracellularly by a furin-like convertase to generate 2 subunits, alpha and beta, which remain associated through disulfide bonds and are associated with the cell surface via the GPI-anchor. This processing is essential for its role in inhibition of hedgehog signaling. A second proteolytic event may result in cleavage of the protein on the cell surface, separating it from the GPI-anchor and leading to its shedding from the cell surface.

The protein resides in the cell membrane. In terms of biological role, cell surface proteoglycan. Negatively regulates the hedgehog signaling pathway when attached via the GPI-anchor to the cell surface by competing with the hedgehog receptor PTC1 for binding to hedgehog proteins. Binding to the hedgehog protein SHH triggers internalization of the complex by endocytosis and its subsequent lysosomal degradation. Positively regulates the canonical Wnt signaling pathway by binding to the Wnt receptor Frizzled and stimulating the binding of the Frizzled receptor to Wnt ligands. Positively regulates the non-canonical Wnt signaling pathway. Binds to CD81 which decreases the availability of free CD81 for binding to the transcriptional repressor HHEX, resulting in nuclear translocation of HHEX and transcriptional repression. Inhibits the dipeptidyl peptidase activity of DPP4. Plays a role in limb patterning and skeletal development by controlling the cellular response to BMP4. Modulates the effects of growth factors BMP2, BMP7 and FGF7 on renal branching morphogenesis. Required for coronary vascular development. Plays a role in regulating cell movements during gastrulation. The chain is Glypican-3 (Gpc3) from Rattus norvegicus (Rat).